A 145-amino-acid chain; its full sequence is MRVVIQRVNHAQVNINGKTVGKIGKGVMLLVGIKNGDELPVVKKAADKIAKMRIFEDEEGKTNLSLKDVGGEILSVSQFTLMANTKKGNRPSFVDAMRPPKSKELWEDFNKELEADSFHVETGEFGADMQVELENDGPFTIVLDL.

The Gly-cisPro motif, important for rejection of L-amino acids motif lies at 137 to 138 (GP).

Belongs to the DTD family. As to quaternary structure, homodimer.

The protein resides in the cytoplasm. It catalyses the reaction glycyl-tRNA(Ala) + H2O = tRNA(Ala) + glycine + H(+). The enzyme catalyses a D-aminoacyl-tRNA + H2O = a tRNA + a D-alpha-amino acid + H(+). Its function is as follows. An aminoacyl-tRNA editing enzyme that deacylates mischarged D-aminoacyl-tRNAs. Also deacylates mischarged glycyl-tRNA(Ala), protecting cells against glycine mischarging by AlaRS. Acts via tRNA-based rather than protein-based catalysis; rejects L-amino acids rather than detecting D-amino acids in the active site. By recycling D-aminoacyl-tRNA to D-amino acids and free tRNA molecules, this enzyme counteracts the toxicity associated with the formation of D-aminoacyl-tRNA entities in vivo and helps enforce protein L-homochirality. The protein is D-aminoacyl-tRNA deacylase of Lactobacillus helveticus (strain DPC 4571).